Reading from the N-terminus, the 441-residue chain is Transcriptional regulatory protein ZraR (441 aa).

One can recognise a Response regulatory domain in the interval 7–121 (DILVVDDDVS…RLQETLEKAL (115 aa)). At D56 the chain carries 4-aspartylphosphate. The region spanning 141 to 370 (MIGSSPAMQH…LENAIERAVV (230 aa)) is the Sigma-54 factor interaction domain. Residues G172, T173, R329, and R359 each contribute to the ATP site. Residues 421–440 (KTEAARQLGITRKTLLAKLS) constitute a DNA-binding region (H-T-H motif).

In terms of assembly, forms homohexamers in the crystal structure. However, the dimerization interface between DNA-binding domains observed in the crystal structure suggests that dodecamers, rather than hexamers, might be the functionally important oligomer. Post-translationally, phosphorylated by ZraS.

The protein localises to the cytoplasm. Activity of the ZraS/ZraR two-component system is repressed by the zinc-bound form of ZraP, which probably interacts with the periplasmic region of ZraS. Part of the Zra signaling pathway, an envelope stress response (ESR) system composed of the periplasmic accessory protein ZraP, the histidine kinase ZraS and the transcriptional regulator ZraR. The ZraPSR system contributes to antibiotic resistance and is important for membrane integrity in the presence of membrane-targeting biocides. ZraR is a member of the two-component regulatory system ZraS/ZraR. When activated by ZraS, acts in conjunction with sigma-54 to regulate the expression of zraP in the presence of high Zn(2+) or Pb(2+) concentrations. Also positively autoregulates the expression of the zraSR operon. This Salmonella typhimurium (strain LT2 / SGSC1412 / ATCC 700720) protein is Transcriptional regulatory protein ZraR.